The following is a 771-amino-acid chain: Beta-glucan synthesis-associated protein SKN1 (771 aa).

A compositionally biased stretch (polar residues) spans 1–11; it reads MSVRNLTNNRH. Disordered regions lie at residues 1-112 and 126-186; these read MSVR…QRMS and ANNL…PFDR. The Cytoplasmic portion of the chain corresponds to 1–289; it reads MSVRNLTNNR…DDFKHMDRRS (289 aa). A compositionally biased stretch (low complexity) spans 14 to 37; sequence SENSVSGSENSFYSSNEQSRQSSS. Phosphoserine occurs at positions 56, 65, 67, 92, 103, 142, 162, 165, 170, and 176. Over residues 76–93 the composition is skewed to low complexity; the sequence is NEYSSSSSINYNNDPNSD. Low complexity-rich tracts occupy residues 126-152 and 159-177; these read ANNL…FASH and NLPS…NNSL. A helical; Signal-anchor for type II membrane protein membrane pass occupies residues 290–310; it reads FLGLLGILFLFMAGIFIFIVL. Residues 311–771 lie on the Lumenal side of the membrane; the sequence is PAITFSGVVY…GCSSSKFSLS (461 aa). 6 N-linked (GlcNAc...) asparagine glycosylation sites follow: N337, N426, N513, N590, N615, and N743. Residues 353–716 enclose the GH16 domain; the sequence is AIRTTLVDPD…YVRLYQPKGS (364 aa).

It belongs to the SKN1/KRE6 family.

It localises to the membrane. In terms of biological role, required for synthesis of the major beta-glucans of the yeast cell wall. This Saccharomyces cerevisiae (strain ATCC 204508 / S288c) (Baker's yeast) protein is Beta-glucan synthesis-associated protein SKN1 (SKN1).